Reading from the N-terminus, the 184-residue chain is MISAEEALYQSCYCEENVYKLIEKIDDKNGIFAIIISNDCKMIPLWKQKAAKSINGHVLWDYHVIAIEKEKNGSKVYDLDSTLEWSCDFLEYWEKTMNLAEMAQRDTKFRRKFRVIPGENYISLLSSDRSHMLSKNGVYLKPPPEWPLINSHKPSNLMELIRMSEQIENTTVMDEPELFQLFSK.

Catalysis depends on residues Cys14, His63, and Asp78.

The protein belongs to the NTAQ1 family. As to quaternary structure, monomer.

The catalysed reaction is N-terminal L-glutaminyl-[protein] + H2O = N-terminal L-glutamyl-[protein] + NH4(+). In terms of biological role, mediates the side-chain deamidation of N-terminal glutamine residues to glutamate, an important step in N-end rule pathway of protein degradation. Conversion of the resulting N-terminal glutamine to glutamate renders the protein susceptible to arginylation, polyubiquitination and degradation as specified by the N-end rule. Does not act on substrates with internal or C-terminal glutamine and does not act on non-glutamine residues in any position. The protein is Protein N-terminal glutamine amidohydrolase of Caenorhabditis elegans.